The sequence spans 62 residues: Sec-independent protein translocase protein TatA (62 aa).

Residues 1–21 traverse the membrane as a helical segment; it reads MFGIGIPELLVIFVLILLVFG.

This sequence belongs to the TatA/E family. As to quaternary structure, the Tat system comprises two distinct complexes: a TatABC complex, containing multiple copies of TatA, TatB and TatC subunits, and a separate TatA complex, containing only TatA subunits. Substrates initially bind to the TatABC complex, which probably triggers association of the separate TatA complex to form the active translocon.

It localises to the cell inner membrane. Functionally, part of the twin-arginine translocation (Tat) system that transports large folded proteins containing a characteristic twin-arginine motif in their signal peptide across membranes. TatA could form the protein-conducting channel of the Tat system. This is Sec-independent protein translocase protein TatA from Oleidesulfovibrio alaskensis (strain ATCC BAA-1058 / DSM 17464 / G20) (Desulfovibrio alaskensis).